We begin with the raw amino-acid sequence, 257 residues long: MHVDVVSIFPEYFAPLDLSLIGRARASGTLRLAVHDLRAWTHDVHRTVDDTPYGGGPGMVMRPEPWGEALDALAPPGGTPPRLLVPTPAGVPFSQALAHELASESHLLFACGRYEGIDQRVLDHAASRMPVTEVSLGDYVLFGGEVAVLVILEAVTRLLPGVLGNVGSLDDESHAHGLLEAPMYTKPAAWRDREVPAVLRSGDHGKIARWRRNEALVRTVARRPDMIAALAPESLDPRDRAVLEGAGFSAPPGDVAE.

S-adenosyl-L-methionine contacts are provided by residues Gly-112 and 136–141 (LGDYVL).

This sequence belongs to the RNA methyltransferase TrmD family. As to quaternary structure, homodimer.

Its subcellular location is the cytoplasm. The enzyme catalyses guanosine(37) in tRNA + S-adenosyl-L-methionine = N(1)-methylguanosine(37) in tRNA + S-adenosyl-L-homocysteine + H(+). Specifically methylates guanosine-37 in various tRNAs. The chain is tRNA (guanine-N(1)-)-methyltransferase from Salinispora arenicola (strain CNS-205).